Reading from the N-terminus, the 106-residue chain is Glycoprotein GP16 (106 aa).

Post-translationally, glycosylated.

Its subcellular location is the host cytoplasm. May be involved in formation or transport of the nucleocapsid-containing vesicles around the nuclear membrane. This is Glycoprotein GP16 (GP16) from Autographa californica nuclear polyhedrosis virus (AcMNPV).